Reading from the N-terminus, the 492-residue chain is Poly(3-hydroxyalkanoate) polymerase subunit PhaC (492 aa).

The 267-residue stretch at 70–336 folds into the AB hydrolase-1 domain; sequence PILIVYALIN…VIEGATGHIG (267 aa). Residues C150, D305, and H334 each act as charge relay system in the active site. The interval 359-443 is disordered; sequence SETGTDETPD…EELESIDGIG (85 aa). Composition is skewed to acidic residues over residues 362–371 and 379–388; these read GTDETPDSET and QAEETDETPD.

Belongs to the PHA/PHB synthase family. As to quaternary structure, heterodimer with PhaE.

Its pathway is biopolymer metabolism; poly-(R)-3-hydroxybutanoate biosynthesis. Functionally, involved in the production of polyhydroxyalkonic acids (PHAs), which are water-insoluble biopolymers used as intracellular energy reserve material when cells grow under conditions of nutrient limitation. PHAs are composed primarily of 3-hydroxybutyric acid (3HB) and 3-hydroxyvaleric acid (3HV). Required for the production of poly-beta-hydroxybutyrate (PHB) and poly(beta-hydroxybutyrate-co-beta-hydroxyvalerate) (PHBV). This is Poly(3-hydroxyalkanoate) polymerase subunit PhaC (phaC) from Haloferax mediterranei (strain ATCC 33500 / DSM 1411 / JCM 8866 / NBRC 14739 / NCIMB 2177 / R-4) (Halobacterium mediterranei).